We begin with the raw amino-acid sequence, 87 residues long: Small archaeal modifier protein 1 (87 aa).

G87 is modified (1-thioglycine; alternate). Residue G87 is modified to Glycyl adenylate; alternate. G87 is covalently cross-linked (Glycyl lysine isopeptide (Gly-Lys) (interchain with K-? in acceptor proteins); alternate).

In terms of processing, the C-terminal glycine is likely acyl-adenylated (-COAMP) by UbaA, and also probably thiocarboxylated (-COSH) to function in sulfur transfer.

Functionally, functions as a protein modifier covalently attached to lysine residues of substrate proteins, as well as a sulfur carrier in molybdenum cofactor (MoCo) biosynthesis. The protein modification process is termed sampylation and involves the formation of an isopeptide bond between the SAMP1 C-terminal glycine carboxylate and the epsilon-amino group of lysine residues on target proteins. May serve as a proteolytic signal in the cell to target proteins for degradation by proteasomes. The sequence is that of Small archaeal modifier protein 1 (samp1) from Haloferax volcanii (strain ATCC 29605 / DSM 3757 / JCM 8879 / NBRC 14742 / NCIMB 2012 / VKM B-1768 / DS2) (Halobacterium volcanii).